The chain runs to 269 residues: UPF0524 protein C3orf70 homolog A (269 aa).

Disordered stretches follow at residues 139 to 203 (VQRP…DSGI) and 215 to 249 (DEDS…QDEC). Residues 141–150 (RPPPPTPNPT) show a composition bias toward pro residues. Over residues 151–164 (HQPQTAAPQPVPQR) the composition is skewed to low complexity. Residues 179 to 191 (QAKEKISAPKMDH) are compositionally biased toward basic and acidic residues. Positions 215–233 (DEDSCVDDDDEEEEDDELS) are enriched in acidic residues.

Belongs to the UPF0524 family.

In terms of biological role, plays a role in neuronal and neurobehavioral development. Required for normal expression of neuronal markers elavl3 and eno2 and neurobehaviors related to circadian rhythm and changes in light-dark conditions. The polypeptide is UPF0524 protein C3orf70 homolog A (Danio rerio (Zebrafish)).